Here is a 215-residue protein sequence, read N- to C-terminus: Sec-independent protein translocase protein TatB (215 aa).

The helical transmembrane segment at 1 to 21 (MLDIGWTELVVIAIVLIIVVG) threads the bilayer. 2 disordered regions span residues 95-119 (DLQKATTPDRPPASATPEPLVEPVN) and 138-215 (AVSS…KGDA). Residues 145–157 (QMDRAADVPKASE) are compositionally biased toward basic and acidic residues. The segment covering 203–215 (SKTRAASRKKGDA) has biased composition (basic residues).

This sequence belongs to the TatB family. The Tat system comprises two distinct complexes: a TatABC complex, containing multiple copies of TatA, TatB and TatC subunits, and a separate TatA complex, containing only TatA subunits. Substrates initially bind to the TatABC complex, which probably triggers association of the separate TatA complex to form the active translocon.

Its subcellular location is the cell inner membrane. Part of the twin-arginine translocation (Tat) system that transports large folded proteins containing a characteristic twin-arginine motif in their signal peptide across membranes. Together with TatC, TatB is part of a receptor directly interacting with Tat signal peptides. TatB may form an oligomeric binding site that transiently accommodates folded Tat precursor proteins before their translocation. In Rhizobium meliloti (strain 1021) (Ensifer meliloti), this protein is Sec-independent protein translocase protein TatB.